The following is a 110-amino-acid chain: Endoribonuclease SymE (110 aa).

In terms of domain architecture, SpoVT-AbrB spans 29 to 74 (SRYPDYTRIPALTMKGQWLEAAGFATGTEVDVRVMNGCIVLTAQQP).

It belongs to the SymE family.

It localises to the cytoplasm. Involved in the degradation and recycling of damaged RNA. It is itself a target for degradation by the ATP-dependent protease Lon. This Salmonella typhi protein is Endoribonuclease SymE.